A 100-amino-acid polypeptide reads, in one-letter code: Tetrahydromethanopterin S-methyltransferase subunit B (100 aa).

The helical transmembrane segment at 80–100 threads the bilayer; that stretch reads KLTNIVYGFILGLIILFALLL.

It belongs to the MtrB family. As to quaternary structure, the complex is composed of 8 subunits; MtrA, MtrB, MtrC, MtrD, MtrE, MtrF, MtrG and MtrH.

It localises to the cell membrane. It carries out the reaction 5-methyl-5,6,7,8-tetrahydromethanopterin + coenzyme M + 2 Na(+)(in) = 5,6,7,8-tetrahydromethanopterin + methyl-coenzyme M + 2 Na(+)(out). It participates in one-carbon metabolism; methanogenesis from CO(2); methyl-coenzyme M from 5,10-methylene-5,6,7,8-tetrahydromethanopterin: step 2/2. Its function is as follows. Part of a complex that catalyzes the formation of methyl-coenzyme M and tetrahydromethanopterin from coenzyme M and methyl-tetrahydromethanopterin. This is an energy-conserving, sodium-ion translocating step. The chain is Tetrahydromethanopterin S-methyltransferase subunit B from Methanothermobacter marburgensis (strain ATCC BAA-927 / DSM 2133 / JCM 14651 / NBRC 100331 / OCM 82 / Marburg) (Methanobacterium thermoautotrophicum).